The chain runs to 134 residues: Small ribosomal subunit protein uS8c (134 aa).

It belongs to the universal ribosomal protein uS8 family. As to quaternary structure, part of the 30S ribosomal subunit.

Its subcellular location is the plastid. The protein resides in the chloroplast. In terms of biological role, one of the primary rRNA binding proteins, it binds directly to 16S rRNA central domain where it helps coordinate assembly of the platform of the 30S subunit. The polypeptide is Small ribosomal subunit protein uS8c (rps8) (Cucumis sativus (Cucumber)).